We begin with the raw amino-acid sequence, 147 residues long: Excisionase (147 aa).

Its function is as follows. Excisionase and integrase are necessary for the excision of prophage from the host genome by site-specific recombination. The polypeptide is Excisionase (xis) (Shigella phage SfV (Shigella flexneri bacteriophage V)).